The sequence spans 557 residues: Urocanate hydratase (557 aa).

NAD(+) contacts are provided by residues 53 to 54 (GG), Gln-131, 177 to 179 (GMG), Glu-197, Arg-202, 243 to 244 (NA), 264 to 268 (QTSAH), 274 to 275 (YL), and Tyr-323. Cys-411 is a catalytic residue. Gly-493 contributes to the NAD(+) binding site.

Belongs to the urocanase family. NAD(+) is required as a cofactor.

The protein localises to the cytoplasm. The catalysed reaction is 4-imidazolone-5-propanoate = trans-urocanate + H2O. It functions in the pathway amino-acid degradation; L-histidine degradation into L-glutamate; N-formimidoyl-L-glutamate from L-histidine: step 2/3. Its function is as follows. Catalyzes the conversion of urocanate to 4-imidazolone-5-propionate. This is Urocanate hydratase from Pseudomonas putida (strain GB-1).